We begin with the raw amino-acid sequence, 591 residues long: V-type ATP synthase alpha chain (591 aa).

233-240 (GPFGAGKT) is a binding site for ATP.

Belongs to the ATPase alpha/beta chains family.

It catalyses the reaction ATP + H2O + 4 H(+)(in) = ADP + phosphate + 5 H(+)(out). In terms of biological role, produces ATP from ADP in the presence of a proton gradient across the membrane. The V-type alpha chain is a catalytic subunit. In Streptococcus pyogenes serotype M18 (strain MGAS8232), this protein is V-type ATP synthase alpha chain.